Here is a 560-residue protein sequence, read N- to C-terminus: Dihydroxy-acid dehydratase (560 aa).

C52 provides a ligand contact to [2Fe-2S] cluster. D84 is a binding site for Mg(2+). C125 lines the [2Fe-2S] cluster pocket. The Mg(2+) site is built by D126 and K127. K127 is subject to N6-carboxylysine. C197 is a binding site for [2Fe-2S] cluster. Mg(2+) is bound at residue E449. The active-site Proton acceptor is S475.

This sequence belongs to the IlvD/Edd family. Homodimer. Requires [2Fe-2S] cluster as cofactor. Mg(2+) is required as a cofactor.

It carries out the reaction (2R)-2,3-dihydroxy-3-methylbutanoate = 3-methyl-2-oxobutanoate + H2O. The catalysed reaction is (2R,3R)-2,3-dihydroxy-3-methylpentanoate = (S)-3-methyl-2-oxopentanoate + H2O. It participates in amino-acid biosynthesis; L-isoleucine biosynthesis; L-isoleucine from 2-oxobutanoate: step 3/4. The protein operates within amino-acid biosynthesis; L-valine biosynthesis; L-valine from pyruvate: step 3/4. Functionally, functions in the biosynthesis of branched-chain amino acids. Catalyzes the dehydration of (2R,3R)-2,3-dihydroxy-3-methylpentanoate (2,3-dihydroxy-3-methylvalerate) into 2-oxo-3-methylpentanoate (2-oxo-3-methylvalerate) and of (2R)-2,3-dihydroxy-3-methylbutanoate (2,3-dihydroxyisovalerate) into 2-oxo-3-methylbutanoate (2-oxoisovalerate), the penultimate precursor to L-isoleucine and L-valine, respectively. The polypeptide is Dihydroxy-acid dehydratase (Sulfurisphaera tokodaii (strain DSM 16993 / JCM 10545 / NBRC 100140 / 7) (Sulfolobus tokodaii)).